We begin with the raw amino-acid sequence, 219 residues long: Probable GTP-binding protein EngB (219 aa).

The 184-residue stretch at 24–207 folds into the EngB-type G domain; sequence VQPEIAFAGR…HALIESWVRP (184 aa). Residues 32 to 39, 59 to 63, 81 to 84, 148 to 151, and 186 to 188 contribute to the GTP site; these read GRSNAGKS, GRTQH, DLPG, TKCD, and FSA. Mg(2+) is bound by residues Ser39 and Thr61.

It belongs to the TRAFAC class TrmE-Era-EngA-EngB-Septin-like GTPase superfamily. EngB GTPase family. Mg(2+) is required as a cofactor.

Necessary for normal cell division and for the maintenance of normal septation. In Burkholderia multivorans (strain ATCC 17616 / 249), this protein is Probable GTP-binding protein EngB.